Reading from the N-terminus, the 87-residue chain is Small ribosomal subunit protein bS16 (87 aa).

This sequence belongs to the bacterial ribosomal protein bS16 family.

The chain is Small ribosomal subunit protein bS16 from Nitrosospira multiformis (strain ATCC 25196 / NCIMB 11849 / C 71).